Consider the following 584-residue polypeptide: 65 kDa membrane protein (584 aa).

Positions 1-30 (MKFKSLITTTLALGVLASTGANFNNNEASA) are cleaved as a signal peptide. MAP repeat units follow at residues 45-154 (GYSK…EDKK), 156-265 (DKAN…ENKA), 266-374 (KRNY…KADR), 375-474 (YVPY…TGTK), and 475-584 (AKAD…KKNK).

It is found in the cell membrane. Its function is as follows. Binds various plasma and ECM-proteins. In Staphylococcus aureus (strain Newman), this protein is 65 kDa membrane protein.